A 129-amino-acid polypeptide reads, in one-letter code: MKNFHVVLEAAWLVRDVKTADDAIGVAISEAGKRLNPKLDFVEVDVGSTSCPACGEPFSSVFIAANTALVGLIFEMKVFDAESAEHAERIAKSVIGKSLRDIPLTVVEVTEFERSGEKGDQQQKGKAKK.

Belongs to the UPF0212 family.

In Methanosarcina acetivorans (strain ATCC 35395 / DSM 2834 / JCM 12185 / C2A), this protein is UPF0212 protein MA_1372.